Reading from the N-terminus, the 381-residue chain is RING-H2 finger protein ATL1 (381 aa).

Residues 1–31 (MDLTDRRNPFNNLVFPPPPPPPSTTFTSPIF) are disordered. Residues 46–66 (IAVIGILATAFLLVSYYIFVI) traverse the membrane as a helical segment. The RING-type; atypical zinc-finger motif lies at 134–176 (CSVCLNEFQEDEKLRIIPNCCHVFHIDCIDIWLQGNANCPLCR). 2 disordered regions span residues 249–269 (TSNEVSTGNSPKSVSPLPIKF) and 334–354 (RQIPVAGDGEDSSSSGGGNSR). Residues 250-261 (SNEVSTGNSPKS) are compositionally biased toward polar residues.

This sequence belongs to the RING-type zinc finger family. ATL subfamily.

Its subcellular location is the membrane. The catalysed reaction is S-ubiquitinyl-[E2 ubiquitin-conjugating enzyme]-L-cysteine + [acceptor protein]-L-lysine = [E2 ubiquitin-conjugating enzyme]-L-cysteine + N(6)-ubiquitinyl-[acceptor protein]-L-lysine.. It participates in protein modification; protein ubiquitination. This Arabidopsis thaliana (Mouse-ear cress) protein is RING-H2 finger protein ATL1 (ATL1).